The following is a 602-amino-acid chain: MPMLRLYARVLQLLGKEAMLGWVLAGANLLLAAAQFAEPVLFGRIVDVLSGNLSTGAMAQPAQSPWPLLLAWAVFGLFTIGCGAAVALHADRLAHRQRQAILTDYFEHVLQLPLTYHTGTHSGRLMKVMLNGTDALWRLWLGFFREHFAALMSLVVLLPLSIYINWRLALLLFALCVVFTVLTTLVVRKTYAMQGEVEESYSDLSARASDALGNIALVQSFVRIDAEVQGLRFVADRLLAMQMPVLSWWALVTVITRASTTITVLAIFTVGIALHEQGLTSVGEIVMFVSFATMLIQKLEQVVGFVNSVFMEAPRLQEFVNVLDAVPAVRDRLDAIDPGRLSGLVEFDNVSFSYDGKRPAIEDLSFTALPGQTIALVGATGAGKSTAIALLHRAFDPQSGVIKIDGMDVRGLTLAGLRRNIGVVFQEALLFDRTIADNLRVGKPDATEEEMRIAASRAQALDFIERSELKFDTNAGERGRMLSGGERQRLSIARALLKDPPILILDEATSALDAVTEAKVNLALDEVMKGRTTFVIAHRLSTIRHATRILVFDNGRVIESGSFDELLARRGYFAELAHAQFMVQDSARSAMPAAQPEGIPEF.

The ABC transmembrane type-1 domain occupies 21 to 311; it reads GWVLAGANLL…VVGFVNSVFM (291 aa). The next 6 membrane-spanning stretches (helical) occupy residues 22-42, 68-88, 146-166, 167-187, 238-258, and 285-305; these read WVLA…PVLF, LLLA…AVAL, EHFA…YINW, RLAL…TLVV, LLAM…ITRA, and IVMF…VVGF. The 235-residue stretch at 345-579 folds into the ABC transporter domain; sequence VEFDNVSFSY…RGYFAELAHA (235 aa). 378-385 serves as a coordination point for ATP; sequence GATGAGKS.

Belongs to the ABC transporter superfamily. Beta-(1--&gt;2)glucan exporter (TC 3.A.1.108.1) family. Homodimer.

It localises to the cell inner membrane. It carries out the reaction [(1-&gt;2)-beta-D-glucosyl](n)(in) + ATP + H2O = [(1-&gt;2)-beta-D-glucosyl](n)(out) + ADP + phosphate + H(+). Functionally, involved in Beta-(1--&gt;2)glucan export. Transmembrane domains (TMD) form a pore in the inner membrane and the ATP-binding domain (NBD) is responsible for energy generation. This is Beta-(1--&gt;2)glucan export ATP-binding/permease protein NdvA from Rhodopseudomonas palustris (strain BisA53).